The sequence spans 170 residues: Adenine phosphoribosyltransferase (170 aa).

Belongs to the purine/pyrimidine phosphoribosyltransferase family. As to quaternary structure, homodimer.

The protein resides in the cytoplasm. The enzyme catalyses AMP + diphosphate = 5-phospho-alpha-D-ribose 1-diphosphate + adenine. Its pathway is purine metabolism; AMP biosynthesis via salvage pathway; AMP from adenine: step 1/1. Its function is as follows. Catalyzes a salvage reaction resulting in the formation of AMP, that is energically less costly than de novo synthesis. The protein is Adenine phosphoribosyltransferase of Kosmotoga olearia (strain ATCC BAA-1733 / DSM 21960 / TBF 19.5.1).